Here is a 448-residue protein sequence, read N- to C-terminus: MASFRSSLLSALCAYGMMVMPAYAIDPNHPKLHHHKYSERLKKRHTEDSYLSSSSTLESSKTFAQEPRRHVLTPIRNVLADRPCEEGLSISKLFNSIEKETNSQISVDFTILPQWFYPKKGLLKAVDEKQPTWQFYVSPNVSWQLYNSPTAGVGSIDFSYTLVRYWRNNAQNANNAIGIAGGINDYSTRTNTLSQLTFSQTFPENILTISFGQYSLYSIDGTLYDNDQQSGFLSYALSQNASATYSSGSVGAYLQFTPTPSINIQAGFQDAYNVSGSSFDLYNLTRNRYNFYGYVSWAPQSSLGSGQYSALVYSTRKVPEQPVQTTGWSLNFGQHLGEKLYVFGRWNGATGTVTNLNRSYVLGLASANPINRNPQDLLGAACSMSKVNPKVITEKKIRKYETVIETFATIGFGPHISLTPDLQIYIHPARRPDKRAAKVYGVRANFST.

The N-terminal stretch at 1-24 is a signal peptide; that stretch reads MASFRSSLLSALCAYGMMVMPAYA.

The protein belongs to the OprB family.

The protein resides in the cell outer membrane. Facilitates L-arginine uptake, as part of the AaxABC system. The arginine uptake by the bacterium in the macrophage may be a virulence factor against the host innate immune response. The protein is Porin AaxA (aaxA) of Chlamydia abortus (strain DSM 27085 / S26/3) (Chlamydophila abortus).